The chain runs to 257 residues: 4-diphosphocytidyl-2-C-methyl-D-erythritol kinase (257 aa).

Lys-8 is an active-site residue. 91 to 101 serves as a coordination point for ATP; that stretch reads PMGGGLGGGSA. The active site involves Asp-131.

This sequence belongs to the GHMP kinase family. IspE subfamily.

The catalysed reaction is 4-CDP-2-C-methyl-D-erythritol + ATP = 4-CDP-2-C-methyl-D-erythritol 2-phosphate + ADP + H(+). The protein operates within isoprenoid biosynthesis; isopentenyl diphosphate biosynthesis via DXP pathway; isopentenyl diphosphate from 1-deoxy-D-xylulose 5-phosphate: step 3/6. Functionally, catalyzes the phosphorylation of the position 2 hydroxy group of 4-diphosphocytidyl-2C-methyl-D-erythritol. In Petrotoga mobilis (strain DSM 10674 / SJ95), this protein is 4-diphosphocytidyl-2-C-methyl-D-erythritol kinase.